A 711-amino-acid chain; its full sequence is Polyribonucleotide nucleotidyltransferase (711 aa).

Positions 486 and 492 each coordinate Mg(2+). A KH domain is found at 553–612 (PRIHTIKISPDKIKDVIGKGGSVIRALTEETGTTIEIEDDGTVKIAATDGEKAKFAIRRI). Residues 622-690 (GRIYNGKVTR…RQGRVRLSIK (69 aa)) form the S1 motif domain. A disordered region spans residues 690-711 (KEATEQTQPAAAPEAPAAEQGE). The segment covering 694 to 711 (EQTQPAAAPEAPAAEQGE) has biased composition (low complexity).

The protein belongs to the polyribonucleotide nucleotidyltransferase family. Component of the RNA degradosome, which is a multiprotein complex involved in RNA processing and mRNA degradation. Requires Mg(2+) as cofactor.

The protein localises to the cytoplasm. It catalyses the reaction RNA(n+1) + phosphate = RNA(n) + a ribonucleoside 5'-diphosphate. Its function is as follows. Involved in mRNA degradation. Catalyzes the phosphorolysis of single-stranded polyribonucleotides processively in the 3'- to 5'-direction. This is Polyribonucleotide nucleotidyltransferase from Enterobacter sp. (strain 638).